A 153-amino-acid polypeptide reads, in one-letter code: 6,7-dimethyl-8-ribityllumazine synthase (153 aa).

5-amino-6-(D-ribitylamino)uracil is bound by residues Phe21, 55 to 57, and 79 to 81; these read AFE and TVI. Residue 84 to 85 participates in (2S)-2-hydroxy-3-oxobutyl phosphate binding; the sequence is AT. His87 functions as the Proton donor in the catalytic mechanism. Phe112 serves as a coordination point for 5-amino-6-(D-ribitylamino)uracil. Arg126 serves as a coordination point for (2S)-2-hydroxy-3-oxobutyl phosphate.

The protein belongs to the DMRL synthase family. In terms of assembly, forms an icosahedral capsid composed of 60 subunits, arranged as a dodecamer of pentamers.

It carries out the reaction (2S)-2-hydroxy-3-oxobutyl phosphate + 5-amino-6-(D-ribitylamino)uracil = 6,7-dimethyl-8-(1-D-ribityl)lumazine + phosphate + 2 H2O + H(+). The protein operates within cofactor biosynthesis; riboflavin biosynthesis; riboflavin from 2-hydroxy-3-oxobutyl phosphate and 5-amino-6-(D-ribitylamino)uracil: step 1/2. Its function is as follows. Catalyzes the formation of 6,7-dimethyl-8-ribityllumazine by condensation of 5-amino-6-(D-ribitylamino)uracil with 3,4-dihydroxy-2-butanone 4-phosphate. This is the penultimate step in the biosynthesis of riboflavin. The polypeptide is 6,7-dimethyl-8-ribityllumazine synthase (Bacillus cereus (strain 03BB102)).